The following is a 515-amino-acid chain: Maturase K (515 aa).

Belongs to the intron maturase 2 family. MatK subfamily.

It is found in the plastid. Its subcellular location is the chloroplast. In terms of biological role, usually encoded in the trnK tRNA gene intron. Probably assists in splicing its own and other chloroplast group II introns. The chain is Maturase K from Zingiber mioga (Myoga ginger).